An 81-amino-acid chain; its full sequence is Photosystem I iron-sulfur center (81 aa).

4Fe-4S ferredoxin-type domains lie at 2–31 (SHTV…MVPW) and 37–68 (GQIA…VRVY). The [4Fe-4S] cluster site is built by C11, C14, C17, C21, C48, C51, C54, and C58.

The eukaryotic PSI reaction center is composed of at least 11 subunits. [4Fe-4S] cluster is required as a cofactor.

The protein localises to the plastid. It is found in the chloroplast thylakoid membrane. The catalysed reaction is reduced [plastocyanin] + hnu + oxidized [2Fe-2S]-[ferredoxin] = oxidized [plastocyanin] + reduced [2Fe-2S]-[ferredoxin]. In terms of biological role, apoprotein for the two 4Fe-4S centers FA and FB of photosystem I (PSI); essential for photochemical activity. FB is the terminal electron acceptor of PSI, donating electrons to ferredoxin. The C-terminus interacts with PsaA/B/D and helps assemble the protein into the PSI complex. Required for binding of PsaD and PsaE to PSI. PSI is a plastocyanin/cytochrome c6-ferredoxin oxidoreductase, converting photonic excitation into a charge separation, which transfers an electron from the donor P700 chlorophyll pair to the spectroscopically characterized acceptors A0, A1, FX, FA and FB in turn. The polypeptide is Photosystem I iron-sulfur center (Thalassiosira pseudonana (Marine diatom)).